A 100-amino-acid chain; its full sequence is uncharacterized protein (100 aa).

This is an uncharacterized protein from Acidianus convivator (ATV).